A 456-amino-acid chain; its full sequence is Argininosuccinate lyase (456 aa).

The protein belongs to the lyase 1 family. Argininosuccinate lyase subfamily.

Its subcellular location is the cytoplasm. The enzyme catalyses 2-(N(omega)-L-arginino)succinate = fumarate + L-arginine. The protein operates within amino-acid biosynthesis; L-arginine biosynthesis; L-arginine from L-ornithine and carbamoyl phosphate: step 3/3. This Carboxydothermus hydrogenoformans (strain ATCC BAA-161 / DSM 6008 / Z-2901) protein is Argininosuccinate lyase.